Reading from the N-terminus, the 313-residue chain is Flagellin (313 aa).

Coiled coils occupy residues 5-33 (INTN…ERLS) and 97-117 (VQSE…KEVT). Tandem repeats lie at residues 179–197 (KEAV…VPAD), 199–217 (KNGV…VKAQ), 255–259 (VNNLN), and 262–266 (VNNLS). A 2 X 19 AA approximate tandem repeats region spans residues 179–217 (KEAVAAKPAVPAQPAVPADPKNGVAAKPAVPAQPEVKAQ). Low complexity predominate over residues 190–199 (AQPAVPADPK). The disordered stretch occupies residues 190–211 (AQPAVPADPKNGVAAKPAVPAQ). Residues 252–298 (ESTVNNLNNTVNNLSAARSRIEDADYAVEVSNMSRGQILQQAGTSVL) are a coiled coil. A 2 X 5 AA approximate repeats of V-N-N-L-N region spans residues 255–266 (VNNLNNTVNNLS).

It belongs to the bacterial flagellin family.

The protein localises to the secreted. It is found in the bacterial flagellum. Flagellin is the subunit protein which polymerizes to form the filaments of bacterial flagella. In Xenorhabdus nematophila (Achromobacter nematophilus), this protein is Flagellin (fliC).